The sequence spans 190 residues: Protein FAM210B, mitochondrial (190 aa).

The N-terminal 58 residues, Met-1–Cys-58, are a transit peptide targeting the mitochondrion. The segment covering Gly-56–Arg-66 has biased composition (basic and acidic residues). The interval Gly-56 to Leu-81 is disordered. A DUF1279 domain is found at Glu-78 to Lys-189. Helical transmembrane passes span Val-97–Val-117 and Phe-148–Val-168.

It belongs to the FAM210 family. As to expression, expressed in late erythroblast differentiation stages.

Its subcellular location is the mitochondrion. The protein localises to the mitochondrion outer membrane. Its function is as follows. Plays a role in erythroid differentiation. Involved in cell proliferation and tumor cell growth suppression. Involved in the metabolic reprogramming of cancer cells in a PDK4-dependent manner. The sequence is that of Protein FAM210B, mitochondrial from Mus musculus (Mouse).